A 200-amino-acid polypeptide reads, in one-letter code: MVKEQVYKSTIKSRPLLFLEMKKVSILLNKGFKEFEVKEKAISENIFQVNTESRKKEIASSVLARLKILDDYLIREIGHGDIESSKAIVLYSIMKTDRLFFEFMNEVFKEKFVFGETFLTDADFNIFFENKQQQSEKVASWNDYTFYKLKQVYIRILFEAGYLKNQKGNREIERPLLNIDVVEHIRALGDGIYMDILVGE.

This sequence belongs to the BrxA family.

BREX systems (bacteriophage exclusion) provide immunity against bacteriophage. Part of a type 1 BREX system. This system allows phage adsorption but prevents phage DNA replication, without degradation of the phage DNA. Methylation of bacterial DNA by PglX probably guides self/non-self discrimination. When the brxA-brxB-brxC-pglX and pglZ-brxL operons are transformed into a susceptible B.subtilis strain (BEST7003) they confer resistance to bacteriophages SPbeta, SP16, Zeta, phi3T and SP02 and partial protection to phages SP01 and SP82G (these include lytic and temperate phage). They do not protect against phages phi105, rho10 or rho14. Additionally confers a very slight reduction in efficiency of plasmid transformation. The sequence is that of BREX protein BrxA from Bacillus cereus (strain H3081.97).